The chain runs to 183 residues: Crossover junction endodeoxyribonuclease RuvC (183 aa).

Residues Asp7, Glu66, and Asp138 contribute to the active site. 3 residues coordinate Mg(2+): Asp7, Glu66, and Asp138.

This sequence belongs to the RuvC family. As to quaternary structure, homodimer which binds Holliday junction (HJ) DNA. The HJ becomes 2-fold symmetrical on binding to RuvC with unstacked arms; it has a different conformation from HJ DNA in complex with RuvA. In the full resolvosome a probable DNA-RuvA(4)-RuvB(12)-RuvC(2) complex forms which resolves the HJ. Mg(2+) serves as cofactor.

It localises to the cytoplasm. It carries out the reaction Endonucleolytic cleavage at a junction such as a reciprocal single-stranded crossover between two homologous DNA duplexes (Holliday junction).. The RuvA-RuvB-RuvC complex processes Holliday junction (HJ) DNA during genetic recombination and DNA repair. Endonuclease that resolves HJ intermediates. Cleaves cruciform DNA by making single-stranded nicks across the HJ at symmetrical positions within the homologous arms, yielding a 5'-phosphate and a 3'-hydroxyl group; requires a central core of homology in the junction. The consensus cleavage sequence is 5'-(A/T)TT(C/G)-3'. Cleavage occurs on the 3'-side of the TT dinucleotide at the point of strand exchange. HJ branch migration catalyzed by RuvA-RuvB allows RuvC to scan DNA until it finds its consensus sequence, where it cleaves and resolves the cruciform DNA. This is Crossover junction endodeoxyribonuclease RuvC from Burkholderia ambifaria (strain MC40-6).